We begin with the raw amino-acid sequence, 501 residues long: 1-aminocyclopropane-1-carboxylate synthase-like protein 1 (501 aa).

Residue glutamate 105 coordinates substrate. N6-(pyridoxal phosphate)lysine is present on lysine 323. Positions 480-501 (GKSQVAEDPRPSQSQEPSDQRR) are disordered. A compositionally biased stretch (polar residues) spans 490–501 (PSQSQEPSDQRR).

The protein belongs to the class-I pyridoxal-phosphate-dependent aminotransferase family.

In terms of biological role, does not catalyze the synthesis of 1-aminocyclopropane-1-carboxylate but is capable of catalyzing the deamination of L-vinylglycine. This is 1-aminocyclopropane-1-carboxylate synthase-like protein 1 (ACCS) from Homo sapiens (Human).